Here is a 97-residue protein sequence, read N- to C-terminus: MSNPPTRPTLYNLVNADGELSYRARDLVQDFSVPIPHELPDPDLVHSIQDFATEYMLATGKKSFECLDESALLGLGYLVTEWMDAMVTDCLEEFEER.

In terms of assembly, component of the UAF (upstream activation factor) complex which consists of spp27/uaf30, rrn5, rrn10, and histones H3 and H4. Interacts with rrn5 and spp27/uaf30.

The protein resides in the cytoplasm. The protein localises to the nucleus. Its subcellular location is the nucleolus. Component of the UAF (upstream activation factor) complex which interacts with the upstream element of the RNA polymerase I promoter and forms a stable preinitiation complex. UAF seems to stimulate basal transcription to a fully activated level. The protein is RNA polymerase I-specific transcription initiation factor rrn10 (rrn10) of Schizosaccharomyces pombe (strain 972 / ATCC 24843) (Fission yeast).